A 1036-amino-acid polypeptide reads, in one-letter code: Putative GPI-anchored protein pfl2 (1036 aa).

The signal sequence occupies residues 1–23; it reads MKFFTASTLFLLAAQSLNSGVSA. N-linked (GlcNAc...) asparagine glycosylation is found at Asn-66, Asn-97, Asn-165, Asn-201, Asn-233, Asn-259, Asn-277, Asn-296, Asn-312, Asn-331, Asn-347, Asn-363, Asn-379, Asn-395, Asn-410, Asn-429, Asn-445, Asn-461, Asn-477, Asn-493, Asn-509, Asn-524, Asn-543, Asn-559, and Asn-573. Disordered stretches follow at residues 88 to 130 and 147 to 183; these read SSSL…SSLA and SSLA…SLSS. Over residues 243–585 the composition is skewed to low complexity; that stretch reads SSISSTVSSS…ITSSASGSTG (343 aa). Residues 243–710 form a disordered region; it reads SSISSTVSSS…PLSNSTVAPT (468 aa). Residues 586 to 595 show a composition bias toward polar residues; it reads EFTNTNSGNG. Positions 597 to 630 are enriched in low complexity; that stretch reads VSGSVTTPTSTPLSNSTVAPTSTFTSSGFNTTSG. Asn-611, Asn-626, Asn-642, Asn-657, Asn-673, Asn-688, Asn-704, Asn-719, and Asn-735 each carry an N-linked (GlcNAc...) asparagine glycan. Over residues 631 to 647 the composition is skewed to polar residues; sequence LPTSSASTPLSNSTVAP. Residues 648–692 show a composition bias toward low complexity; it reads TSTFTSSGFNTTSGLPTSSASTPSSNSSIVPTSTFTSSGFNTTSG. Over residues 693–709 the composition is skewed to polar residues; that stretch reads LPTSSASTPLSNSTVAP. Low complexity-rich tracts occupy residues 722-831, 838-862, and 885-906; these read SGLP…TTAS, PTAA…ATYT, and IPVN…SFTP. 2 disordered regions span residues 722-862 and 885-918; these read SGLP…ATYT and IPVN…SYSN. N-linked (GlcNAc...) asparagine glycans are attached at residues Asn-918, Asn-924, Asn-930, Asn-933, Asn-939, Asn-947, and Asn-977. The segment at 978 to 1011 is disordered; the sequence is TTATSGSDDDVKTASTSSSTSYTSSSSSSSSTTS. Over residues 990-1011 the composition is skewed to low complexity; that stretch reads TASTSSSTSYTSSSSSSSSTTS. Ser-1011 is lipidated: GPI-anchor amidated serine. Positions 1012 to 1036 are cleaved as a propeptide — removed in mature form; sequence AASSKASVSMGLNGLMIAAVILLVA.

The protein localises to the cell membrane. In terms of biological role, may be involved in agglutination during conjugation or other aspects of colony formation. Induces flocculation when overexpressed. The chain is Putative GPI-anchored protein pfl2 from Schizosaccharomyces pombe (strain 972 / ATCC 24843) (Fission yeast).